We begin with the raw amino-acid sequence, 353 residues long: Guanidino acid hydrolase, mitochondrial (353 aa).

The transit peptide at 1 to 33 directs the protein to the mitochondrion; that stretch reads MLQLLKSSWVRSAGSGVVTWRASAGLFCPGTRQ. The interval 29–52 is disordered; it reads PGTRQASDTSDTLHHPSPSSESQV. The Mn(2+) site is built by H163 and H188. K194 bears the N6-acetyllysine mark. K218 bears the N6-acetyllysine; alternate mark. An N6-succinyllysine; alternate modification is found at K218. D279 is a binding site for Mn(2+).

This sequence belongs to the arginase family. Agmatinase subfamily. The cofactor is Mn(2+).

Its subcellular location is the mitochondrion. It carries out the reaction 3-guanidinopropanoate + H2O = urea + beta-alanine. It catalyses the reaction 4-guanidinobutanoate + H2O = urea + 4-aminobutanoate. The catalysed reaction is taurocyamine + H2O = urea + taurine. The enzyme catalyses L-arginine + H2O = urea + L-ornithine. It functions in the pathway nitrogen metabolism; urea cycle; L-ornithine and urea from L-arginine: step 1/1. In terms of biological role, hydrolyzes linear guanidino acids to form urea and the corresponding amines. Displays specificity for substrates having a negatively charged head group and short chains including taurocyamine, guanidino propanoic and butanoic acids. May protect cells by detoxifying potentially harmful amounts of guanidino acids. Metabolizes L-arginine with low efficiency. In Rattus norvegicus (Rat), this protein is Guanidino acid hydrolase, mitochondrial (Agmat).